Here is a 357-residue protein sequence, read N- to C-terminus: P2Y purinoceptor 8 (357 aa).

Topologically, residues M1 to P26 are extracellular. N-linked (GlcNAc...) asparagine glycosylation is present at N4. Residues V27 to L47 traverse the membrane as a helical segment. The Cytoplasmic portion of the chain corresponds to C48–P56. A helical transmembrane segment spans residues S57–F77. The Extracellular segment spans residues Q78–L97. An intrachain disulfide couples C95 to C174. Residues V98–I118 traverse the membrane as a helical segment. The Cytoplasmic segment spans residues E119–R137. A helical transmembrane segment spans residues Y138–E158. At S159 to N185 the chain is on the extracellular side. A helical membrane pass occupies residues F186–I206. Residues V207–Y236 lie on the Cytoplasmic side of the membrane. The chain crosses the membrane as a helical span at residues L237–L257. The Extracellular portion of the chain corresponds to A258–Y271. The helical transmembrane segment at P272 to F294 threads the bilayer. Residues A295 to F357 are Cytoplasmic-facing.

Belongs to the G-protein coupled receptor 1 family.

The protein resides in the cell membrane. In terms of biological role, probable receptor for purines coupled to G-proteins. The protein is P2Y purinoceptor 8 (P2RY8) of Gallus gallus (Chicken).